An 840-amino-acid chain; its full sequence is Translation initiation factor IF-2 (840 aa).

The segment covering 95–143 (RSPDEIEAERQRELEEQRAAEEAERLKAEEAAARQRAEEEARKAEEAAR) has biased composition (basic and acidic residues). 2 disordered regions span residues 95-155 (RSPD…ATAG) and 172-256 (KPAA…PTGP). The span at 144 to 155 (AKAAQEAAATAG) shows a compositional bias: low complexity. Composition is skewed to basic and acidic residues over residues 175 to 191 (AVEERKKEEPRRAPKRD) and 223 to 232 (STDEESDGYR). Over residues 233–247 (RGGRGGKSKLKKRNQ) the composition is skewed to basic residues. A tr-type G domain is found at 340 to 509 (TRAPVVTVMG…LLQAEVLELK (170 aa)). Residues 349–356 (GHVDHGKT) are G1. 349–356 (GHVDHGKT) lines the GTP pocket. A G2 region spans residues 374–378 (GITQH). The segment at 395-398 (DTPG) is G3. Residues 395-399 (DTPGH) and 449-452 (NKID) each bind GTP. Positions 449–452 (NKID) are G4. The G5 stretch occupies residues 485–487 (SAK).

Belongs to the TRAFAC class translation factor GTPase superfamily. Classic translation factor GTPase family. IF-2 subfamily.

The protein resides in the cytoplasm. Functionally, one of the essential components for the initiation of protein synthesis. Protects formylmethionyl-tRNA from spontaneous hydrolysis and promotes its binding to the 30S ribosomal subunits. Also involved in the hydrolysis of GTP during the formation of the 70S ribosomal complex. This Pseudomonas aeruginosa (strain LESB58) protein is Translation initiation factor IF-2.